Reading from the N-terminus, the 262-residue chain is Tetratricopeptide repeat protein 33 (262 aa).

The tract at residues 17–63 is disordered; it reads ATSQQFEAEAADEKDAAENEDGNWLQASKRRKETLQEGCKQRSQQLK. TPR repeat units follow at residues 59–92, 93–126, and 127–160; these read SQQLKDEGAQLAENKRYKEAIQKWDEALQLTPGD, ATLYEMKSQVLLSLHEMFPAVHAAEMAVKRNPHS, and WEAWQTLGRAQLGLGEIVLAIRSFQIALHIYPMN. Ser-197 bears the Phosphoserine mark.

The protein is Tetratricopeptide repeat protein 33 (Ttc33) of Mus musculus (Mouse).